A 415-amino-acid chain; its full sequence is Gamma-glutamyl phosphate reductase (415 aa).

This sequence belongs to the gamma-glutamyl phosphate reductase family.

The protein resides in the cytoplasm. The enzyme catalyses L-glutamate 5-semialdehyde + phosphate + NADP(+) = L-glutamyl 5-phosphate + NADPH + H(+). The protein operates within amino-acid biosynthesis; L-proline biosynthesis; L-glutamate 5-semialdehyde from L-glutamate: step 2/2. Its function is as follows. Catalyzes the NADPH-dependent reduction of L-glutamate 5-phosphate into L-glutamate 5-semialdehyde and phosphate. The product spontaneously undergoes cyclization to form 1-pyrroline-5-carboxylate. This Mycobacterium sp. (strain JLS) protein is Gamma-glutamyl phosphate reductase.